The following is a 180-amino-acid chain: MFMNLLTQVSNAIFPQVEAAQKMSNRAVAVLRGETVTGTIWITQKSENDQAVIEGEIKGLTPGLHGFHVHQYGDSTNGCISAGPHFNPFGKTHGGPKSEIRHVGDLGNVEAGADGVAKIKLTDTLVTLYGPNTVVGRSMVVHAGQDDLGEGVGDKAEESKKTGNAGARAACGVIALAAPQ.

The first 19 residues, 1–19 (MFMNLLTQVSNAIFPQVEA), serve as a signal peptide directing secretion. Positions 68, 70, and 85 each coordinate Cu cation. A disulfide bond links Cys79 and Cys171. Zn(2+)-binding residues include His85, His93, His102, and Asp105. His142 is a binding site for Cu cation.

It belongs to the Cu-Zn superoxide dismutase family. In terms of assembly, homodimer. It depends on Cu cation as a cofactor. Zn(2+) serves as cofactor.

The protein localises to the cytoplasm. It catalyses the reaction 2 superoxide + 2 H(+) = H2O2 + O2. The insertion of copper which activates the protein requires glutathione. This is independent of copper chaperone for SOD1 (CCS), which activates orthologs. In terms of biological role, protects cells against oxidative stress by converting superoxide radicals to hydrogen peroxide. Required for normal brood size. May be involved in regulating mpk-1 phosphorylation downstream of phosphatase ptp-2 during oocyte maturation. This Caenorhabditis elegans protein is Superoxide dismutase [Cu-Zn] (sod-1).